Reading from the N-terminus, the 365-residue chain is tRNA/tmRNA (uracil-C(5))-methyltransferase (365 aa).

The S-adenosyl-L-methionine site is built by Gln189, Tyr217, Asn222, Glu238, and Asp298. The active-site Nucleophile is the Cys323. Glu357 serves as the catalytic Proton acceptor.

This sequence belongs to the class I-like SAM-binding methyltransferase superfamily. RNA M5U methyltransferase family. TrmA subfamily.

The enzyme catalyses uridine(54) in tRNA + S-adenosyl-L-methionine = 5-methyluridine(54) in tRNA + S-adenosyl-L-homocysteine + H(+). The catalysed reaction is uridine(341) in tmRNA + S-adenosyl-L-methionine = 5-methyluridine(341) in tmRNA + S-adenosyl-L-homocysteine + H(+). In terms of biological role, dual-specificity methyltransferase that catalyzes the formation of 5-methyluridine at position 54 (m5U54) in all tRNAs, and that of position 341 (m5U341) in tmRNA (transfer-mRNA). This is tRNA/tmRNA (uracil-C(5))-methyltransferase from Shewanella baltica (strain OS155 / ATCC BAA-1091).